An 808-amino-acid polypeptide reads, in one-letter code: MAASERSIDKEVDMGSSFLQKFRLYETRSSFYMIGRDKNRTSWRVLKLDRTEPAEVNIYEDSTAYTEAECFETLRRIHEGNRSSGGLKFVTTCYGIIGFIRFLGPYYMLIITKRKKLGEICGHTVYGVAKSKIITIPHASVLSNVAYSKDEKRYKRLLCTVDLTKDFFFSYSYHIMHTLQRNLSNNVEGHTYYESMFVWNEYLTRRIRNNVKDCMWTVALVYGFFKQVKLSVSEKNFRLTLISRRSRHYAGTRYLKRGVNEKGRVANDVETEQIVFEEAQDGNPGRISSVVQNRGSIPLFWSQETSRLNIKPDIILSPKDPNFEATRLHFENLGRRYGNPIIILNLIKTREKRPRETILRAEFANAIRFINKGLSKEDRLRPLHWDLHKHSRKKGTNVLAILGRLATYALNLTSIFYCQLTPDLRGEGFQNQNPSTLENDDGECSTYDPPSKDETAPNLVVENGNDSKDAKEDQQKEVTMLQKGVLRTNCIDCLDRTNVAQYAYGLVAFGRQLHALGLTESTNIDLDNPLAEDLMGIYETMGDTLALQYGGSAAHNKIFCERRGQWRAATQSQEFFRTLQRYYSNAYMDAEKQDAINVFLGYFQPQSDKPALWELGSDQHYNAARFLANSVPETSRSTMKRSLSESSIISESSPAALGPVGRHGLAEKDEEVKGLSDSAPEISTSETAKIAASLSAPPPILEELGLDDILENDCFCCDGNGEQCTCAAFDMDWVSSSGNSCEDESCGRATVVRSFETIPESRKIESEICVVETVGSNSRKGNKEEEEAISGIPEGYVRWVMDEDGHFW.

One can recognise an SAC domain in the interval 158–551; that stretch reads LCTVDLTKDF…GDTLALQYGG (394 aa). Positions 429-476 are disordered; the sequence is FQNQNPSTLENDDGECSTYDPPSKDETAPNLVVENGNDSKDAKEDQQK. Residues 465–476 are compositionally biased toward basic and acidic residues; that stretch reads NDSKDAKEDQQK. The Phosphatase catalytic core signature appears at 487–498; that stretch reads RTNCIDCLDRTN.

Component of the PI(3,5)P2 regulatory complex at least composed of ATG18, SAC/FIG4, FAB1 and VAC14. Requires Mg(2+) as cofactor. Ubiquitous with a higher level of expression in young seedlings than in other tissues.

The protein localises to the vacuole membrane. The enzyme catalyses a 1,2-diacyl-sn-glycero-3-phospho-(1D-myo-inositol-3,5-bisphosphate) + H2O = a 1,2-diacyl-sn-glycero-3-phospho-(1D-myo-inositol-3-phosphate) + phosphate. The PI(3,5)P2 regulatory complex regulates both the synthesis and turnover of phosphatidylinositol 3,5-bisphosphate (PtdIns(3,5)P2). The polypeptide is Phosphoinositide phosphatase SAC2 (SAC2) (Arabidopsis thaliana (Mouse-ear cress)).